The chain runs to 268 residues: uncharacterized protein (268 aa).

3 helical membrane passes run 169-189 (AIIYVFMCLFFSLFWFYQGFA), 190-210 (GVKTSILTGTAEIGLAILWLL), and 225-245 (IFAGFACLGSEIFMWVLLSVF).

The protein localises to the cell membrane. This is an uncharacterized protein from Bacillus subtilis (strain 168).